Here is a 679-residue protein sequence, read N- to C-terminus: Protein polyglycylase TTLL10 (679 aa).

The segment covering 1 to 15 (MPLHPPARRPHGHRR) has biased composition (basic residues). 3 disordered regions span residues 1–33 (MPLH…GRLS), 49–77 (GHRA…LMPA), and 96–124 (VSFK…RMGS). Residues 18–30 (SEAQTEATTQDTG) are compositionally biased toward polar residues. Residues 96-110 (VSFKRPKRSRTHQSH) show a composition bias toward basic residues. The TTL domain maps to 172 to 543 (QGPFFYIGGT…TCQKSLHSQK (372 aa)). Residues Lys304, 310-311 (QG), 353-356 (QRYV), 366-368 (KFD), and 409-410 (TN) each bind ATP. An a protein-binding site is contributed by Gln310. Mg(2+)-binding residues include Asp489, Glu502, and Asn504. The interval 605–679 (DRPAARKSMS…EQRSTSHRGS (75 aa)) is disordered.

It depends on Mg(2+) as a cofactor.

It is found in the cytoplasm. It localises to the cytoskeleton. The protein localises to the cell projection. The protein resides in the cilium. Its subcellular location is the cilium axoneme. It catalyses the reaction (glycyl)(n)-glycyl-L-glutamyl-[protein] + glycine + ATP = (glycyl)(n+1)-glycyl-L-glutamyl-[protein] + ADP + phosphate + H(+). Its function is as follows. Polyglycylase which modifies both tubulin and non-tubulin proteins, generating polyglycine side chains of variable lengths on the gamma-carboxyl groups of specific glutamate residues of target proteins. Involved in the elongation step rather than the initiation step of the polyglycylation reaction. Polyglycylates alpha-tubulin and beta-tubulin. Polyglycylates non-tubulin proteins such as nucleosome assembly protein NAP1. In Rattus norvegicus (Rat), this protein is Protein polyglycylase TTLL10.